Consider the following 137-residue polypeptide: Peptide methionine sulfoxide reductase MsrB (137 aa).

The MsrB domain occupies 7–129 (AEELKKKLSE…NSASLAFSDE (123 aa)). Residues Cys46, Cys49, Cys95, and Cys98 each contribute to the Zn(2+) site. Cys118 (nucleophile) is an active-site residue.

Belongs to the MsrB Met sulfoxide reductase family. Zn(2+) is required as a cofactor.

The enzyme catalyses L-methionyl-[protein] + [thioredoxin]-disulfide + H2O = L-methionyl-(R)-S-oxide-[protein] + [thioredoxin]-dithiol. In Salmonella dublin (strain CT_02021853), this protein is Peptide methionine sulfoxide reductase MsrB.